The chain runs to 319 residues: Meiotic drive suppressor wtf16 (319 aa).

Disordered regions lie at residues 1 to 22 and 35 to 68; these read MKNN…KTGH and DSEE…RSTD. Helical transmembrane passes span 73–93, 110–130, 153–173, 187–207, 215–235, and 241–261; these read FLIK…LAIC, WTLF…LTYF, VVII…CIKF, CSIS…FWTL, FQVL…MYLF, and ATGY…FFFY.

The protein belongs to the WTF family. Homomer. Interacts with other proteins that exhibit high sequence similarity.

The protein localises to the spore membrane. The protein resides in the vacuole membrane. In terms of biological role, acts as a suppressor component of the dual wtf meiotic drive system, and can suppress but not confer meiotic drive by compatible poisons. Wtf meiotic drive systems promote unequal transmission of alleles from the parental zygote to progeny spores by encoding a poison and an antidote from the same locus; the poison is trans-acting and forms toxic aggregates in all spores within an ascus, wherease the antidote is spore-specific and targets aggregates for degradation by the vacuole. Meiotic drive by wtf systems therefore lead to poisoning of all progeny that do not inherit the dual poison/antidote allele, or express a compatible antidote. This is Meiotic drive suppressor wtf16 from Schizosaccharomyces pombe (strain 972 / ATCC 24843) (Fission yeast).